Here is a 403-residue protein sequence, read N- to C-terminus: Dynactin subunit 2 (403 aa).

The tract at residues 1-26 is disordered; that stretch reads MADPKYADLPGIARNEPDVYETSDLP. An N-acetylalanine modification is found at alanine 2. Phosphotyrosine is present on tyrosine 6. At serine 83 the chain carries Phosphoserine. At tyrosine 86 the chain carries Phosphotyrosine. Residues 100-130 are a coiled coil; that stretch reads QQKYQRLLHEVQELTTEVEKIKTTVKESATE. Phosphothreonine occurs at positions 134 and 200. Residues 184–204 are disordered; the sequence is TKNSKGTGSGGKTTSGTPPDS. Positions 216-248 form a coiled coil; it reads EQDKFSQAAKVAELEKRLTELEATVRCDQDAQN. Serine 322 is modified (phosphoserine).

This sequence belongs to the dynactin subunit 2 family. As to quaternary structure, subunit of dynactin, a multiprotein complex part of a tripartite complex with dynein and a adapter, such as BICDL1, BICD2 or HOOK3. The dynactin complex is built around ACTR1A/ACTB filament and consists of an actin-related filament composed of a shoulder domain, a pointed end and a barbed end. Its length is defined by its flexible shoulder domain. The soulder is composed of 2 DCTN1 subunits, 4 DCTN2 and 2 DCTN3. The 4 DCNT2 (via N-terminus) bind the ACTR1A filament and act as molecular rulers to determine the length. The pointed end is important for binding dynein-dynactin cargo adapters and consists of 4 subunits: ACTR10, DCNT4, DCTN5 and DCTN6. The barbed end is composed of a CAPZA1:CAPZB heterodimers, which binds ACTR1A/ACTB filament and dynactin and stabilizes dynactin. Interacts with BICD2 and CEP135. Interacts with DYNAP. Interacts with ECPAS. Interacts with MAPRE1.

Its subcellular location is the cytoplasm. The protein localises to the cytoskeleton. It is found in the microtubule organizing center. The protein resides in the centrosome. It localises to the membrane. Part of the dynactin complex that activates the molecular motor dynein for ultra-processive transport along microtubules. In the dynactin soulder domain, binds the ACTR1A filament and acts as a molecular ruler to determine the length. Modulates cytoplasmic dynein binding to an organelle, and plays a role in prometaphase chromosome alignment and spindle organization during mitosis. Involved in anchoring microtubules to centrosomes. May play a role in synapse formation during brain development. The chain is Dynactin subunit 2 (DCTN2) from Bos taurus (Bovine).